Reading from the N-terminus, the 859-residue chain is Homeobox-leucine zipper protein HOX32 (859 aa).

Residues 7–31 (AAVHGVGRQDRSSPGGGGAPQVDTG) are disordered. The homeobox DNA-binding region spans 29–92 (DTGKYVRYTP…NRRCREKQRK (64 aa)). The stretch at 100 to 129 (VNRKLTAMNKLLMEENDRLQKQVSRLVYEN) forms a coiled coil. Residues 146–164 (TSCESVVTSGQHHQQQNPA) show a composition bias toward polar residues. The tract at residues 146-172 (TSCESVVTSGQHHQQQNPAATRPQRDA) is disordered. Positions 171-393 (DANNPAGLLA…LRHIRQIAHE (223 aa)) constitute an START domain.

The protein belongs to the HD-ZIP homeobox family. Class III subfamily. Expressed in seedlings, roots, stems, leaf sheaths and blades and panicles.

The protein localises to the nucleus. In terms of biological role, probable transcription factor. In Oryza sativa subsp. indica (Rice), this protein is Homeobox-leucine zipper protein HOX32 (HOX32).